Here is a 142-residue protein sequence, read N- to C-terminus: Biogenesis of lysosome-related organelles complex 1 subunit 2 (142 aa).

Positions methionine 1 to alanine 33 are disordered. Alanine 2 is modified (N-acetylalanine). Residues arginine 12–alanine 33 are compositionally biased toward basic and acidic residues. Residues glutamate 79–alanine 127 are a coiled coil.

It belongs to the BLOC1S2 family. As to quaternary structure, component of the biogenesis of lysosome-related organelles complex 1 (BLOC-1) composed of BLOC1S1, BLOC1S2, BLOC1S3, BLOC1S4, BLOC1S5, BLOC1S6, DTNBP1/BLOC1S7 and SNAPIN/BLOC1S8. Octamer composed of one copy each BLOC1S1, BLOC1S2, BLOC1S3, BLOC1S4, BLOC1S5, BLOC1S6, DTNBP1/BLOC1S7 and SNAPIN/BLOC1S8. Interacts directly with BLOC1S1, BLOC1S3, BLOC1S4, BLOC1S5 and SNAPIN. The BLOC-1 complex associates with the AP-3 protein complex and membrane protein cargos. Component of the BLOC-one-related complex (BORC) which is composed of BLOC1S1, BLOC1S2, BORCS5, BORCS6, BORCS7, BORCS8, KXD1 and SNAPIN. Interacts with gamma-tubulin. Interacts with IFT57. In terms of tissue distribution, isoform 1 and isoform 2 are widely expressed. Expressed in various malignant tumor tissues (at protein level).

It is found in the cytoplasm. The protein resides in the cytoskeleton. The protein localises to the microtubule organizing center. It localises to the centrosome. Its subcellular location is the lysosome membrane. Component of the BLOC-1 complex, a complex that is required for normal biogenesis of lysosome-related organelles (LRO), such as platelet dense granules and melanosomes. In concert with the AP-3 complex, the BLOC-1 complex is required to target membrane protein cargos into vesicles assembled at cell bodies for delivery into neurites and nerve terminals. The BLOC-1 complex, in association with SNARE proteins, is also proposed to be involved in neurite extension. As part of the BORC complex may play a role in lysosomes movement and localization at the cell periphery. Associated with the cytosolic face of lysosomes, the BORC complex may recruit ARL8B and couple lysosomes to microtubule plus-end-directed kinesin motor. May play a role in cell proliferation. This is Biogenesis of lysosome-related organelles complex 1 subunit 2 (BLOC1S2) from Homo sapiens (Human).